The primary structure comprises 327 residues: DNA-directed RNA polymerase subunit alpha (327 aa).

An alpha N-terminal domain (alpha-NTD) region spans residues 1 to 231 (MIYQMQMPAK…DHIMYFANFS (231 aa)). The alpha C-terminal domain (alpha-CTD) stretch occupies residues 247 to 327 (DEFESMRKLL…GMDITRYQMK (81 aa)).

This sequence belongs to the RNA polymerase alpha chain family. Homodimer. The RNAP catalytic core consists of 2 alpha, 1 beta, 1 beta' and 1 omega subunit. When a sigma factor is associated with the core the holoenzyme is formed, which can initiate transcription.

The enzyme catalyses RNA(n) + a ribonucleoside 5'-triphosphate = RNA(n+1) + diphosphate. Functionally, DNA-dependent RNA polymerase catalyzes the transcription of DNA into RNA using the four ribonucleoside triphosphates as substrates. In Chlorobium phaeobacteroides (strain DSM 266 / SMG 266 / 2430), this protein is DNA-directed RNA polymerase subunit alpha.